We begin with the raw amino-acid sequence, 250 residues long: Nuclear transcription factor Y subunit C-4 (250 aa).

Residues 1 to 10 (MDNNNNNNNQ) show a composition bias toward low complexity. 2 disordered regions span residues 1 to 35 (MDNN…PSGS) and 209 to 250 (GVYA…DSQG). Over residues 214-225 (PPSQAWQSVWQN) the composition is skewed to polar residues. A compositionally biased stretch (gly residues) spans 227 to 242 (AGGGDDVSYGSGGSSG).

The protein belongs to the NFYC/HAP5 subunit family. As to quaternary structure, heterotrimeric transcription factor composed of three components, NF-YA, NF-YB and NF-YC. NF-YB and NF-YC must interact and dimerize for NF-YA association and DNA binding. As to expression, ubiquitous. Present in etiolated seedlings.

The protein localises to the nucleus. Its function is as follows. Stimulates the transcription of various genes by recognizing and binding to a CCAAT motif in promoters. Involved in the abscisic acid (ABA) signaling pathway. This is Nuclear transcription factor Y subunit C-4 (NFYC4) from Arabidopsis thaliana (Mouse-ear cress).